Reading from the N-terminus, the 199-residue chain is 3-isopropylmalate dehydratase small subunit (199 aa).

Belongs to the LeuD family. LeuD type 1 subfamily. Heterodimer of LeuC and LeuD.

It catalyses the reaction (2R,3S)-3-isopropylmalate = (2S)-2-isopropylmalate. The protein operates within amino-acid biosynthesis; L-leucine biosynthesis; L-leucine from 3-methyl-2-oxobutanoate: step 2/4. Functionally, catalyzes the isomerization between 2-isopropylmalate and 3-isopropylmalate, via the formation of 2-isopropylmaleate. This chain is 3-isopropylmalate dehydratase small subunit, found in Pseudoalteromonas translucida (strain TAC 125).